Here is a 267-residue protein sequence, read N- to C-terminus: 3-methyl-2-oxobutanoate hydroxymethyltransferase (267 aa).

Mg(2+) is bound by residues D46 and D85. Residues D46–S47, D85, and K115 contribute to the 3-methyl-2-oxobutanoate site. E117 serves as a coordination point for Mg(2+). E184 acts as the Proton acceptor in catalysis.

It belongs to the PanB family. Homodecamer; pentamer of dimers. It depends on Mg(2+) as a cofactor.

The protein resides in the cytoplasm. The enzyme catalyses 3-methyl-2-oxobutanoate + (6R)-5,10-methylene-5,6,7,8-tetrahydrofolate + H2O = 2-dehydropantoate + (6S)-5,6,7,8-tetrahydrofolate. It participates in cofactor biosynthesis; (R)-pantothenate biosynthesis; (R)-pantoate from 3-methyl-2-oxobutanoate: step 1/2. Catalyzes the reversible reaction in which hydroxymethyl group from 5,10-methylenetetrahydrofolate is transferred onto alpha-ketoisovalerate to form ketopantoate. The polypeptide is 3-methyl-2-oxobutanoate hydroxymethyltransferase (Geobacter sulfurreducens (strain ATCC 51573 / DSM 12127 / PCA)).